A 341-amino-acid polypeptide reads, in one-letter code: L-threonine 3-dehydrogenase (341 aa).

Cys38 is a Zn(2+) binding site. Residues Thr40 and His43 each act as charge relay system in the active site. Positions 63, 64, 93, 96, 99, and 107 each coordinate Zn(2+). Residues Ile175, Asp195, Arg200, 262–264 (LGI), and 286–287 (IY) contribute to the NAD(+) site.

The protein belongs to the zinc-containing alcohol dehydrogenase family. As to quaternary structure, homotetramer. The cofactor is Zn(2+).

It localises to the cytoplasm. It catalyses the reaction L-threonine + NAD(+) = (2S)-2-amino-3-oxobutanoate + NADH + H(+). The protein operates within amino-acid degradation; L-threonine degradation via oxydo-reductase pathway; glycine from L-threonine: step 1/2. Its function is as follows. Catalyzes the NAD(+)-dependent oxidation of L-threonine to 2-amino-3-ketobutyrate. This chain is L-threonine 3-dehydrogenase, found in Escherichia coli O127:H6 (strain E2348/69 / EPEC).